Reading from the N-terminus, the 201-residue chain is Small ribosomal subunit protein uS4 (201 aa).

Residues Lys28–Tyr47 are disordered. The region spanning Gly92 to Leu155 is the S4 RNA-binding domain.

The protein belongs to the universal ribosomal protein uS4 family. In terms of assembly, part of the 30S ribosomal subunit. Contacts protein S5. The interaction surface between S4 and S5 is involved in control of translational fidelity.

Functionally, one of the primary rRNA binding proteins, it binds directly to 16S rRNA where it nucleates assembly of the body of the 30S subunit. In terms of biological role, with S5 and S12 plays an important role in translational accuracy. This Bacteroides fragilis (strain YCH46) protein is Small ribosomal subunit protein uS4.